Consider the following 863-residue polypeptide: MNGEQQLDADLGSGVEVEEFSWEDYLEETGATTAPYASFKHVDICLQSGFAPGMKLEVALRKDPETYWVATVITACEQLLLLRYEGYGEDRKADFWCDIRRAGLYPIGWCQQNKKTLEAPEGIRDKVSDWSAFLQRTLTGACGPPVALLEGLRNGRNPLDLIAPGSRLECQDFRDSVSTWIVTVVENIGGRLKLQYEGLERHDGFEHWLYYLDPFLHHIGWAAQQGYELQPPLAIRHLKNEADWQEILARVKEEEPLPSYLFKDKQVIRTHEFSINMKLEAVDPWSPFGISPATIAKVFDDKYFLVEIDDLRPEDHARRSFVCHANSPGIFPVQWSLKNGLHINPPPGFRSQDFDWADYLKQCGAEAAPQKCFPQSVSEHQFKENMKLEAVNPLFPEEVSIATVTAVRGSYLWLQLEGSKKPVPEFIVSVESMNIFPLGWCETNGHPLSTPRRARGHKLRKIAVVQPEKQILSSRTVHEGLKNQLNSPHSVMINGKYCCPKIYFNHRCFSGPYLNKGRIAELPQCVGPGNCVLVLREVLTLLINAAYKPSRVLRELQLDKDSVWHGCGEVLKAKYKGKSYRATVEIVRTADRVTEFCRQTCIKLECCPNLFGPRMVLDTCSENCSVLTKTKYTHYYGKKKNKRIGRPPGGHSNLSCALKKTSKRRKRRKNIFVHKKKRSSASVDNTPVGSPQGSGGEDEDDADDGDDDSLTEGSTSEQQDELHEESEVSEKKSCSPSPTQSEMSTPLPPDTQTDKREAQTSSLSDGENKPPSPKEIRIEVDERLHLDSNPLKWSVADVVRFIRSTDCAPLARIFLDQEIDGQALLLLTLPTVQECMDLKLGPAIKLCHHIERIKFAFYEQFAN.

MBT repeat units follow at residues 20 to 120 (FSWE…LEAP), 128 to 232 (SDWS…LQPP), 242 to 346 (ADWQ…INPP), and 354 to 451 (FDWA…LSTP). A disordered region spans residues 638–773 (KKKNKRIGRP…SDGENKPPSP (136 aa)). A compositionally biased stretch (basic residues) spans 660–679 (KTSKRRKRRKNIFVHKKKRS). The span at 680 to 691 (SASVDNTPVGSP) shows a compositional bias: polar residues. Over residues 696–710 (GEDEDDADDGDDDSL) the composition is skewed to acidic residues. Ser764 and Ser772 each carry phosphoserine. An SAM domain is found at 793-861 (WSVADVVRFI…RIKFAFYEQF (69 aa)).

In terms of assembly, interacts with MYOD1. Component of the SLC (SFMBT1-LSD1-CoREST) corepressor complex, which also contains KDM1A/LSD1 and RCOR1/CoREST. Interacts with KDM1A/LSD1 and RCOR1/CoREST. Interacts with MYOD1. Interacts with L3MBTL3. Highly expressed in the testis, low expression was detected in brain, kidney, heart and lung.

It is found in the nucleus. Histone-binding protein, which is part of various corepressor complexes. Mediates the recruitment of corepressor complexes to target genes, followed by chromatin compaction and repression of transcription. Plays a role during myogenesis: required for the maintenance of undifferentiated states of myogenic progenitor cells via interaction with MYOD1. Interaction with MYOD1 leads to the recruitment of associated corepressors and silencing of MYOD1 target genes. Part of the SLC complex in germ cells, where it may play a role during spermatogenesis. This Rattus norvegicus (Rat) protein is Scm-like with four MBT domains protein 1 (Sfmbt1).